Here is a 345-residue protein sequence, read N- to C-terminus: Probable galacturonosyltransferase-like 3 (345 aa).

Residues 1 to 7 (MSSLRLR) are Cytoplasmic-facing. Residues 8–28 (LCLLLLLPITISCVTVTLTDL) traverse the membrane as a helical; Signal-anchor for type II membrane protein segment. Over 29–345 (PAFREAPAFR…FRYSPLISDS (317 aa)) the chain is Lumenal. N-linked (GlcNAc...) asparagine glycosylation occurs at N197.

It belongs to the glycosyltransferase 8 family.

The protein resides in the golgi apparatus membrane. The protein operates within glycan metabolism; pectin biosynthesis. May be involved in pectin and/or xylans biosynthesis in cell walls. This chain is Probable galacturonosyltransferase-like 3 (GATL3), found in Arabidopsis thaliana (Mouse-ear cress).